The chain runs to 446 residues: Indoleacetamide hydrolase (446 aa).

Catalysis depends on charge relay system residues K71 and S146. S170 acts as the Acyl-ester intermediate in catalysis.

The protein belongs to the amidase family.

The protein operates within plant hormone metabolism; auxin biosynthesis. Its function is as follows. Hydrolyzes indole-3-acetamide (IAM) into indole-3-acetic acid (IAA). The protein is Indoleacetamide hydrolase (iaaH) of Pseudomonas syringae pv. syringae.